A 109-amino-acid chain; its full sequence is Ribonuclease P protein component (109 aa).

This sequence belongs to the RnpA family. Consists of a catalytic RNA component (M1 or rnpB) and a protein subunit.

The catalysed reaction is Endonucleolytic cleavage of RNA, removing 5'-extranucleotides from tRNA precursor.. In terms of biological role, RNaseP catalyzes the removal of the 5'-leader sequence from pre-tRNA to produce the mature 5'-terminus. It can also cleave other RNA substrates such as 4.5S RNA. The protein component plays an auxiliary but essential role in vivo by binding to the 5'-leader sequence and broadening the substrate specificity of the ribozyme. The protein is Ribonuclease P protein component of Nitratiruptor sp. (strain SB155-2).